A 1196-amino-acid chain; its full sequence is uncharacterized protein (1196 aa).

A helical membrane pass occupies residues 27 to 47 (ILLLLGSFILLNVWINVVTLL). Disordered regions lie at residues 150–345 (GGGE…PQAH), 367–402 (SSVP…ASAP), 669–762 (TQDS…QKNT), 775–806 (CLTQ…DSGI), 826–877 (QATD…QDSE), 960–1009 (YRSS…GPYK), and 1168–1196 (KCEA…DIRM). The segment covering 157 to 177 (VTASKAQASLLSRPETSSQFP) has biased composition (polar residues). Low complexity-rich tracts occupy residues 212–227 (HSPT…HPWT) and 253–279 (THSQ…TPAH). Residues 299–321 (HTSAQAQTHSPPHTPEYTHSQAH) are compositionally biased toward polar residues. Over residues 391–402 (APTPAPVPASAP) the composition is skewed to pro residues. Composition is skewed to polar residues over residues 733–742 (YLCQNPSPSQ), 750–762 (SGIT…QKNT), 787–804 (PFTQ…TQDS), and 826–849 (QATD…TGNV). A compositionally biased stretch (basic and acidic residues) spans 962 to 971 (SSEHSQDSNL).

The protein resides in the membrane. This is an uncharacterized protein from Homo sapiens (Human).